Reading from the N-terminus, the 159-residue chain is Ribosomal RNA large subunit methyltransferase H (159 aa).

Residues leucine 76, glycine 107, and 126-131 (LSKLTM) contribute to the S-adenosyl-L-methionine site.

It belongs to the RNA methyltransferase RlmH family. Homodimer.

It localises to the cytoplasm. It carries out the reaction pseudouridine(1915) in 23S rRNA + S-adenosyl-L-methionine = N(3)-methylpseudouridine(1915) in 23S rRNA + S-adenosyl-L-homocysteine + H(+). Specifically methylates the pseudouridine at position 1915 (m3Psi1915) in 23S rRNA. The sequence is that of Ribosomal RNA large subunit methyltransferase H from Acinetobacter baumannii (strain AB307-0294).